The sequence spans 350 residues: MMMVARDVTRLPAGLLLAALTLAALTPRVGGVLFRGAGVSVHVAGSAVLVPGDAPNLTIDGTLLFLEGPSPSNYSGRVELLRLDPKRACYTREYAAEYDLCPRVHHEAFRGCLRKREPLARRASAAVEARRLLFVSRPAPPDAGSYVLRVRVNGTTDLFVLTALVPPRGRPHHPTPSSADECRPVVGSWHDSLRVVDPAEDAVFTTPPPIEPEPPTTPAPPRGTGATPEPRSDEEEEDEEGATTAMTPVPGTLDANGTMVLNASVVSRVLLAAANATAGARGPGKIAMVLGPTIVVLLIFLGGVACAARRCARGIASTGRDPGAARRSTRRPRGARPPTPSPGRPSPSPR.

Positions 1–31 are cleaved as a signal peptide; that stretch reads MMMVARDVTRLPAGLLLAALTLAALTPRVGG. The Virion surface segment spans residues 32–285; it reads VLFRGAGVSV…ATAGARGPGK (254 aa). Asn56, Asn73, and Asn153 each carry an N-linked (GlcNAc...) asparagine; by host glycan. Positions 202-253 are disordered; sequence AVFTTPPPIEPEPPTTPAPPRGTGATPEPRSDEEEEDEEGATTAMTPVPGTL. The span at 206-221 shows a compositional bias: pro residues; that stretch reads TPPPIEPEPPTTPAPP. Residues 232 to 241 are compositionally biased toward acidic residues; sequence SDEEEEDEEG. N-linked (GlcNAc...) asparagine; by host glycosylation is found at Asn256, Asn262, and Asn275. A helical transmembrane segment spans residues 286–308; that stretch reads IAMVLGPTIVVLLIFLGGVACAA. At 309-350 the chain is on the intravirion side; the sequence is RRCARGIASTGRDPGAARRSTRRPRGARPPTPSPGRPSPSPR. The tract at residues 316 to 350 is disordered; the sequence is ASTGRDPGAARRSTRRPRGARPPTPSPGRPSPSPR. Positions 335–350 are enriched in pro residues; that stretch reads ARPPTPSPGRPSPSPR.

Belongs to the alphaherpesvirinae glycoprotein I family. Interacts with gE.

The protein resides in the virion membrane. Its subcellular location is the host cell membrane. The protein localises to the host cell junction. It localises to the host Golgi apparatus membrane. Its function is as follows. In epithelial cells, the heterodimer gE/gI is required for the cell-to-cell spread of the virus, by sorting nascent virions to cell junctions. Once the virus reaches the cell junctions, virus particles can spread to adjacent cells extremely rapidly through interactions with cellular receptors that accumulate at these junctions. Implicated in basolateral spread in polarized cells. In neuronal cells, gE/gI is essential for the anterograde spread of the infection throughout the host nervous system. Together with US9, the heterodimer gE/gI is involved in the sorting and transport of viral structural components toward axon tips. In Suid herpesvirus 1 (strain Rice) (SuHV-1), this protein is Envelope glycoprotein I (gI).